The primary structure comprises 600 residues: MPEIRVTPLGAGQDVGRSCILVSISGKNVMLDCGMHMGYNDDRRFPDFSYITQSGRLTDFLDCVIISHFHLDHCGALPYFSEMVGYDGPIYMTHPTQAICPILLEDYRKIAVDKKGEANFFTSQMIKDCMKKVVAVHLHQTVQVDDELEIKAYYAGHVLGAAMFQIKVGSESVVYTGDYNMTPDRHLGAAWIDKCRPNLLITESTYATTIRDSKRCRERDFLKKVHETVERGGKVLIPVFALGRAQELCILLETFWERMNLKVPIYFSTGLTEKANHYYKLFITWTNQKIRKTFVQRNMFEFKHIKAFDRTFADNPGPMVVFATPGMLHAGQSLQIFRKWAGNEKNMVIMPGYCVQGTVGHKILSGQRKLEMEGRQMLEVKMQVEYMSFSAHADAKGIMQLVGQAEPESVLLVHGEAKKMEFLRQKIEQEFRVSCYMPANGETVTLPTSPSIPVGISLGLLKREMVQGLLPEAKKPRLLHGTLIMKDSNFRLVSSEQALKELGLAEHQLRFTCRVHLQDTRKEQETALRVYSHLKSTLKDHCVQHLPDGSVTVESILIQAAAHSEDPGTKVLLVSWTYQDEELGSFLTTLLKNGLPQAPS.

Zn(2+)-binding residues include H68, H70, D72, H73, H157, and D178. Positions 68–73 match the HXHXDH motif motif; that stretch reads HFHLDH. E203 is a catalytic residue. K381 participates in a covalent cross-link: Glycyl lysine isopeptide (Lys-Gly) (interchain with G-Cter in SUMO). H414 serves as a coordination point for Zn(2+). Residues K462 and K475 each participate in a glycyl lysine isopeptide (Lys-Gly) (interchain with G-Cter in SUMO) cross-link. Positions 469-479 match the Nuclear localization signal motif; sequence LLPEAKKPRLL.

The protein belongs to the metallo-beta-lactamase superfamily. RNA-metabolizing metallo-beta-lactamase-like family. INTS11 subfamily. Component of the Integrator complex, composed of core subunits INTS1, INTS2, INTS3, INTS4, INTS5, INTS6, INTS7, INTS8, INTS9/RC74, INTS10, INTS11/CPSF3L, INTS12, INTS13, INTS14 and INTS15. The core complex associates with protein phosphatase 2A subunits PPP2CA and PPP2R1A, to form the Integrator-PP2A (INTAC) complex. INTS11 is part of the RNA endonuclease subcomplex, composed of INTS4, INTS9, INTS11 and inositol hexakisphosphate (InsP6). Interacts with WDR73; interaction is required for the assembly of the RNA endonuclease subcomplex in the cytoplasm. Interacts with BRAT1; interaction is required for the assembly of the RNA endonuclease subcomplex and inhibits the endonuclease activity of INTS11 before formation of mature integrator complex. The cofactor is Zn(2+). Post-translationally, sumoylated; sumoylation regulates its subcellular location and is required for integrator complex integrity.

The protein resides in the nucleus. Its subcellular location is the cytoplasm. Its activity is regulated as follows. The RNA endonuclease activity is inhibited by BRAT1 that forms hyrogen bond and hydrophobic interactions with the active site. Its function is as follows. RNA endonuclease component of the integrator complex, a multiprotein complex that terminates RNA polymerase II (Pol II) transcription in the promoter-proximal region of genes. The integrator complex provides a quality checkpoint during transcription elongation by driving premature transcription termination of transcripts that are unfavorably configured for transcriptional elongation: the complex terminates transcription by (1) catalyzing dephosphorylation of the C-terminal domain (CTD) of Pol II subunit POLR2A/RPB1 and SUPT5H/SPT5, (2) degrading the exiting nascent RNA transcript via endonuclease activity and (3) promoting the release of Pol II from bound DNA. The integrator complex is also involved in terminating the synthesis of non-coding Pol II transcripts, such as enhancer RNAs (eRNAs), small nuclear RNAs (snRNAs), telomerase RNAs and long non-coding RNAs (lncRNAs). Within the integrator complex, INTS11 constitutes the RNA endonuclease subunit that degrades exiting nascent RNA transcripts. Mediates recruitment of cytoplasmic dynein to the nuclear envelope, probably as component of the integrator complex. The polypeptide is Integrator complex subunit 11 (Mus musculus (Mouse)).